The chain runs to 499 residues: Protein singed wings 2 (499 aa).

Positions 1-29 (MPSGVFQKRPKAAETISLFCMILIRLSRA) are cleaved as a signal peptide. LRR repeat units lie at residues 154–175 (ELHT…TFKR) and 178–199 (PLKV…LLLP). Residues 210–265 (NPWNCTRNFKWLLLQPEKGRLVVDRDELICTDRKYKERQMLMVMHYKLELKRQCQS) enclose the LRRCT 1 domain. 3 LRR repeats span residues 307-328 (NTTT…RDNP), 332-353 (HVVD…EDTY), and 357-378 (NFRL…ALDN). An LRRCT 2 domain is found at 394–449 (NPWHCTCKFGSRMRELLTKYKDIVRDAWNVSCTYRLDDDQLLAKVLTLSRQEMCNL).

Functionally, has a role in the ecdysone induced cascade; probably indirect control of 'late' ecdysone genes. The polypeptide is Protein singed wings 2 (Drosophila melanogaster (Fruit fly)).